Here is a 310-residue protein sequence, read N- to C-terminus: Ribonuclease Z (310 aa).

Zn(2+) is bound by residues H60, H62, D64, H65, H140, D209, and H269. The active-site Proton acceptor is the D64.

The protein belongs to the RNase Z family. In terms of assembly, homodimer. Requires Zn(2+) as cofactor.

It carries out the reaction Endonucleolytic cleavage of RNA, removing extra 3' nucleotides from tRNA precursor, generating 3' termini of tRNAs. A 3'-hydroxy group is left at the tRNA terminus and a 5'-phosphoryl group is left at the trailer molecule.. Functionally, zinc phosphodiesterase, which displays some tRNA 3'-processing endonuclease activity. Probably involved in tRNA maturation, by removing a 3'-trailer from precursor tRNA. The protein is Ribonuclease Z of Methanococcus maripaludis (strain C7 / ATCC BAA-1331).